We begin with the raw amino-acid sequence, 853 residues long: Transforming growth factor beta receptor type 3 (853 aa).

An N-terminal signal peptide occupies residues M1–A23. The Extracellular portion of the chain corresponds to G24 to V789. Residues N37, N144, and N493 are each glycosylated (N-linked (GlcNAc...) asparagine). A disulfide bond links C55 and C200. Residues K456 to C730 enclose the ZP domain. The interval S530–E559 is disordered. S535 and S546 each carry an O-linked (Xyl...) (glycosaminoglycan) serine glycan. N572, N591, and N698 each carry an N-linked (GlcNAc...) asparagine glycan. 3 cysteine pairs are disulfide-bonded: C640–C706, C661–C730, and C711–C723. The segment at M737 to P751 is interaction with TGF-beta ligand. A helical transmembrane segment spans residues M790–Y811. Residues S812–A853 are Cytoplasmic-facing. A compositionally biased stretch (polar residues) spans R820–A836. A disordered region spans residues R820–A853. The span at S838–A853 shows a compositional bias: low complexity. T842 bears the Phosphothreonine mark.

In terms of assembly, forms homodimers and homooligomers. Interacts with DYNLT4. Interacts with integrin ITGA5:ITGB1; this interaction promotes the internalization and trafficking of ITGA5:ITGB1 into endocytic vesicles. Interacts with TGFB1, BMP2, BMP5, BMP7 or GDF5 and inhibin A via the ligand binding domains. Interacts with ALK3/BMPR1A; this interaction results in the cell surface retention of BMPR1A. Interacts with ALK6/BMPR1B; this interaction enhances BMPR1B-mediated stimulation of the BMP signaling pathway. Interacts with the scaffolding protein beta-arrestin2/ARRB2; this interaction mediates internalization of TGFBR3 and thus regulates migration, actin cytoskeleton and activation of CDC42. Post-translationally, extensively modified by glycosaminoglycan groups (GAG). In terms of processing, phosphorylated in the cytoplasmic domain by the type II receptor TGFBR2 at THR-842 to mediate recruitment of ARRB2 and subsequent internalization of TGFBR2 and TGFBR3.

The protein localises to the cell membrane. It localises to the secreted. The protein resides in the extracellular space. It is found in the extracellular matrix. Cell surface receptor that regulates diverse cellular processes including cell proliferation, differentiation, migration, and apoptosis. Initiates BMP, inhibin, and TGF-beta signaling pathways by interacting with different ligands including TGFB1, BMP2, BMP5, BMP7 or GDF5. Alternatively, acts as a cell surface coreceptor for BMP ligands, serving to enhance ligand binding by differentially regulating BMPR1A/ALK3 and BMPR1B/ALK6 receptor trafficking. Promotes epithelial cell adhesion, focal adhesion formation and integrin signaling during epithelial cell spreading on fibronectin. By interacting with the scaffolding protein beta-arrestin2/ARRB2, regulates migration or actin cytoskeleton and promotes the activation of CDC42 as well as the inhibition of NF-kappa-B. In gonadotrope cells, acts as an inhibin A coreceptor and regulates follicle-stimulating hormone (FSH) levels and female fertility. Plays a role in the inhibition of directed and random cell migration in epithelial cells by altering the actin cytoskeletal organization. Participates in epithelial-mesenchymal transformation (EMT) upon binding to BMP2 or TGFB2, by activating the PAR6/SMURF1/RHOA pathway. The chain is Transforming growth factor beta receptor type 3 (Tgfbr3) from Rattus norvegicus (Rat).